The following is a 129-amino-acid chain: MNHDPLNDVINTIKNASRIGKSEVIIGPASVMIGRILKVMQDYNYIKSFEVIEEERGGKFRVELSDTINNCGVIKPRLSVKNSNIERYESRYLPAQDFGIIILTTTKGIMSHIEARKLGIGGKLLAYVY.

Belongs to the universal ribosomal protein uS8 family. In terms of assembly, part of the 30S ribosomal subunit.

Functionally, one of the primary rRNA binding proteins, it binds directly to 16S rRNA central domain where it helps coordinate assembly of the platform of the 30S subunit. In Picrophilus torridus (strain ATCC 700027 / DSM 9790 / JCM 10055 / NBRC 100828 / KAW 2/3), this protein is Small ribosomal subunit protein uS8.